A 557-amino-acid chain; its full sequence is UvrABC system protein C (557 aa).

In terms of domain architecture, GIY-YIG spans 14-89 (EEPGVYIFKN…IKKYRPKYNV (76 aa)). The 36-residue stretch at 194 to 229 (EEVFDYLKEKMETHSRMLDFENAAKYRDLLLNLSNV) folds into the UVR domain.

This sequence belongs to the UvrC family. Interacts with UvrB in an incision complex.

Its subcellular location is the cytoplasm. Its function is as follows. The UvrABC repair system catalyzes the recognition and processing of DNA lesions. UvrC both incises the 5' and 3' sides of the lesion. The N-terminal half is responsible for the 3' incision and the C-terminal half is responsible for the 5' incision. The polypeptide is UvrABC system protein C (Thermotoga petrophila (strain ATCC BAA-488 / DSM 13995 / JCM 10881 / RKU-1)).